Reading from the N-terminus, the 345-residue chain is Flap endonuclease 1 (345 aa).

The tract at residues 1–103 (MGIKQLSKLL…KELEKRKERR (103 aa)) is N-domain. Asp34 is a binding site for Mg(2+). Positions 47 and 69 each coordinate DNA. Positions 85, 157, 159, 178, and 180 each coordinate Mg(2+). Positions 121-252 (LMEMYDKRKT…KKALGLIKKH (132 aa)) are I-domain. DNA is bound at residue Glu157. DNA-binding residues include Gly230 and Asp232. Position 232 (Asp232) interacts with Mg(2+). The segment at 333-341 (TQGRLDCFI) is interaction with PCNA.

It belongs to the XPG/RAD2 endonuclease family. FEN1 subfamily. Interacts with PCNA. Three molecules of FEN1 bind to one PCNA trimer with each molecule binding to one PCNA monomer. PCNA stimulates the nuclease activity without altering cleavage specificity. It depends on Mg(2+) as a cofactor. Post-translationally, phosphorylated. Phosphorylation upon DNA damage induces relocalization to the nuclear plasma.

The protein resides in the nucleus. It is found in the nucleolus. It localises to the nucleoplasm. Its subcellular location is the mitochondrion. In terms of biological role, structure-specific nuclease with 5'-flap endonuclease and 5'-3' exonuclease activities involved in DNA replication and repair. During DNA replication, cleaves the 5'-overhanging flap structure that is generated by displacement synthesis when DNA polymerase encounters the 5'-end of a downstream Okazaki fragment. It enters the flap from the 5'-end and then tracks to cleave the flap base, leaving a nick for ligation. Also involved in the long patch base excision repair (LP-BER) pathway, by cleaving within the apurinic/apyrimidinic (AP) site-terminated flap. Acts as a genome stabilization factor that prevents flaps from equilibrating into structures that lead to duplications and deletions. Also possesses 5'-3' exonuclease activity on nicked or gapped double-stranded DNA, and exhibits RNase H activity. Also involved in replication and repair of rDNA and in repairing mitochondrial DNA. The polypeptide is Flap endonuclease 1 (Encephalitozoon cuniculi (strain GB-M1) (Microsporidian parasite)).